A 207-amino-acid polypeptide reads, in one-letter code: Octanoyltransferase (207 aa).

Residues 29 to 204 (AETRDELWVV…HLERHLSTSK (176 aa)) enclose the BPL/LPL catalytic domain. Residues 68-75 (RGGQITYH), 135-137 (SLG), and 148-150 (GLS) contribute to the substrate site. Cys-166 (acyl-thioester intermediate) is an active-site residue.

Belongs to the LipB family.

The protein resides in the cytoplasm. The enzyme catalyses octanoyl-[ACP] + L-lysyl-[protein] = N(6)-octanoyl-L-lysyl-[protein] + holo-[ACP] + H(+). The protein operates within protein modification; protein lipoylation via endogenous pathway; protein N(6)-(lipoyl)lysine from octanoyl-[acyl-carrier-protein]: step 1/2. Catalyzes the transfer of endogenously produced octanoic acid from octanoyl-acyl-carrier-protein onto the lipoyl domains of lipoate-dependent enzymes. Lipoyl-ACP can also act as a substrate although octanoyl-ACP is likely to be the physiological substrate. The chain is Octanoyltransferase from Chromobacterium violaceum (strain ATCC 12472 / DSM 30191 / JCM 1249 / CCUG 213 / NBRC 12614 / NCIMB 9131 / NCTC 9757 / MK).